The chain runs to 739 residues: NAD(P)H-quinone oxidoreductase subunit 5, chloroplastic (739 aa).

15 helical membrane-spanning segments follow: residues 9–29 (WVIPFVPLPVTMSIGLGLLLV), 40–60 (WAFPSVLLLSITMVFSSNLSI), 89–109 (IDPLTSIMSILITTVGIVVLI), 144–164 (LIQIHIFWELVGMCSYLLIGF), 184–204 (IGDFGLLLGILGLYWITGSFE), 219–239 (NGVHFVFATLCASLLFVGAVA), 258–278 (TPISALIHAATMVAAGIFLVA), 280–300 (LLPIFTVIPYIMNLIALIGVI), 327–347 (LGYTMLALGIGSYRAALFHLI), 354–374 (ALLFLGSGSIIHSMEPIVGYS), 396–416 (TTFLLGTFSLCGIPPLACFWS), 425–445 (WLYSPIFAIIAYSTAGLTAFY), 542–562 (TMLFPLLVLVLFTLFVGSIGI), 597–617 (FFINAIFSVSISYFGILIAFL), and 719–739 (LFLYLFYIIIIIFLLIFWSLI).

Belongs to the complex I subunit 5 family. As to quaternary structure, NDH is composed of at least 16 different subunits, 5 of which are encoded in the nucleus.

The protein resides in the plastid. Its subcellular location is the chloroplast thylakoid membrane. The enzyme catalyses a plastoquinone + NADH + (n+1) H(+)(in) = a plastoquinol + NAD(+) + n H(+)(out). It catalyses the reaction a plastoquinone + NADPH + (n+1) H(+)(in) = a plastoquinol + NADP(+) + n H(+)(out). Its function is as follows. NDH shuttles electrons from NAD(P)H:plastoquinone, via FMN and iron-sulfur (Fe-S) centers, to quinones in the photosynthetic chain and possibly in a chloroplast respiratory chain. The immediate electron acceptor for the enzyme in this species is believed to be plastoquinone. Couples the redox reaction to proton translocation, and thus conserves the redox energy in a proton gradient. This Chloranthus spicatus (Chulantree) protein is NAD(P)H-quinone oxidoreductase subunit 5, chloroplastic (ndhF).